The following is an 805-amino-acid chain: Leucine--tRNA ligase (805 aa).

The 'HIGH' region motif lies at 40 to 51 (PYPSGAGLHVGH). Residues 576–580 (KMSKS) carry the 'KMSKS' region motif. Lys579 is a binding site for ATP.

Belongs to the class-I aminoacyl-tRNA synthetase family.

The protein resides in the cytoplasm. The catalysed reaction is tRNA(Leu) + L-leucine + ATP = L-leucyl-tRNA(Leu) + AMP + diphosphate. The sequence is that of Leucine--tRNA ligase from Geobacillus thermodenitrificans (strain NG80-2).